The sequence spans 274 residues: Large ribosomal subunit protein uL2 (274 aa).

Disordered stretches follow at residues 28–59 (APYA…GGHK) and 222–274 (GAAM…RRTK). The segment covering 39 to 49 (KSGGRNNNGRI) has biased composition (polar residues). Positions 229 to 239 (DHPHGGGEGRS) are enriched in basic and acidic residues.

Belongs to the universal ribosomal protein uL2 family. In terms of assembly, part of the 50S ribosomal subunit. Forms a bridge to the 30S subunit in the 70S ribosome.

Functionally, one of the primary rRNA binding proteins. Required for association of the 30S and 50S subunits to form the 70S ribosome, for tRNA binding and peptide bond formation. It has been suggested to have peptidyltransferase activity; this is somewhat controversial. Makes several contacts with the 16S rRNA in the 70S ribosome. This is Large ribosomal subunit protein uL2 from Marinomonas sp. (strain MWYL1).